We begin with the raw amino-acid sequence, 349 residues long: Estrogen receptor (349 aa).

Residues 1–5 constitute a DNA-binding region (nuclear receptor); sequence YEVGM. A disordered region spans residues 1 to 38; it reads YEVGMMKGGIRKDRRGGRMLKHKRQREENDSRNAGALT. The span at 12–24 shows a compositional bias: basic residues; the sequence is KDRRGGRMLKHKR. One can recognise an NR LBD domain in the interval 65–301; it reads TADQMVSALL…DLLLEMLDAH (237 aa). The segment at 306–327 is disordered; sequence PAAKGSPPSEDDPLNQLAVPSP.

This sequence belongs to the nuclear hormone receptor family. NR3 subfamily. In terms of assembly, binds DNA as a homodimer. Can form a heterodimer with ER-beta.

It localises to the nucleus. Functionally, the steroid hormones and their receptors are involved in the regulation of eukaryotic gene expression and affect cellular proliferation and differentiation in target tissues. The polypeptide is Estrogen receptor (ESR1) (Anolis carolinensis (Green anole)).